Here is a 95-residue protein sequence, read N- to C-terminus: Small ribosomal subunit protein bS18 (95 aa).

Belongs to the bacterial ribosomal protein bS18 family. Part of the 30S ribosomal subunit. Forms a tight heterodimer with protein bS6.

Its function is as follows. Binds as a heterodimer with protein bS6 to the central domain of the 16S rRNA, where it helps stabilize the platform of the 30S subunit. In Rickettsia akari (strain Hartford), this protein is Small ribosomal subunit protein bS18.